The following is a 342-amino-acid chain: S-adenosylmethionine:tRNA ribosyltransferase-isomerase (342 aa).

This sequence belongs to the QueA family. In terms of assembly, monomer.

It is found in the cytoplasm. It catalyses the reaction 7-aminomethyl-7-carbaguanosine(34) in tRNA + S-adenosyl-L-methionine = epoxyqueuosine(34) in tRNA + adenine + L-methionine + 2 H(+). It functions in the pathway tRNA modification; tRNA-queuosine biosynthesis. Its function is as follows. Transfers and isomerizes the ribose moiety from AdoMet to the 7-aminomethyl group of 7-deazaguanine (preQ1-tRNA) to give epoxyqueuosine (oQ-tRNA). The chain is S-adenosylmethionine:tRNA ribosyltransferase-isomerase from Streptococcus pyogenes serotype M2 (strain MGAS10270).